A 282-amino-acid chain; its full sequence is 4-diphosphocytidyl-2-C-methyl-D-erythritol kinase (282 aa).

The active site involves Lys-12. 95-105 (PMGGGIGGGSS) is a binding site for ATP. Asp-137 is an active-site residue.

It belongs to the GHMP kinase family. IspE subfamily.

The enzyme catalyses 4-CDP-2-C-methyl-D-erythritol + ATP = 4-CDP-2-C-methyl-D-erythritol 2-phosphate + ADP + H(+). It functions in the pathway isoprenoid biosynthesis; isopentenyl diphosphate biosynthesis via DXP pathway; isopentenyl diphosphate from 1-deoxy-D-xylulose 5-phosphate: step 3/6. In terms of biological role, catalyzes the phosphorylation of the position 2 hydroxy group of 4-diphosphocytidyl-2C-methyl-D-erythritol. In Pseudomonas paraeruginosa (strain DSM 24068 / PA7) (Pseudomonas aeruginosa (strain PA7)), this protein is 4-diphosphocytidyl-2-C-methyl-D-erythritol kinase.